A 151-amino-acid chain; its full sequence is Protein InSETG-4 (151 aa).

The protein localises to the cytoplasm. It localises to the cytosol. This is Protein InSETG-4 (InSet4-G) from Homo sapiens (Human).